A 557-amino-acid polypeptide reads, in one-letter code: Dihydroxy-acid dehydratase 1 (557 aa).

Cysteine 50 contributes to the [2Fe-2S] cluster binding site. Aspartate 82 is a binding site for Mg(2+). Cysteine 123 contacts [2Fe-2S] cluster. Residues aspartate 124 and lysine 125 each coordinate Mg(2+). Lysine 125 bears the N6-carboxylysine mark. Cysteine 195 serves as a coordination point for [2Fe-2S] cluster. Glutamate 447 is a binding site for Mg(2+). Residue serine 473 is the Proton acceptor of the active site.

This sequence belongs to the IlvD/Edd family. Homodimer. Requires [2Fe-2S] cluster as cofactor. The cofactor is Mg(2+).

It catalyses the reaction (2R)-2,3-dihydroxy-3-methylbutanoate = 3-methyl-2-oxobutanoate + H2O. The catalysed reaction is (2R,3R)-2,3-dihydroxy-3-methylpentanoate = (S)-3-methyl-2-oxopentanoate + H2O. It participates in amino-acid biosynthesis; L-isoleucine biosynthesis; L-isoleucine from 2-oxobutanoate: step 3/4. Its pathway is amino-acid biosynthesis; L-valine biosynthesis; L-valine from pyruvate: step 3/4. Functionally, functions in the biosynthesis of branched-chain amino acids. Catalyzes the dehydration of (2R,3R)-2,3-dihydroxy-3-methylpentanoate (2,3-dihydroxy-3-methylvalerate) into 2-oxo-3-methylpentanoate (2-oxo-3-methylvalerate) and of (2R)-2,3-dihydroxy-3-methylbutanoate (2,3-dihydroxyisovalerate) into 2-oxo-3-methylbutanoate (2-oxoisovalerate), the penultimate precursor to L-isoleucine and L-valine, respectively. The sequence is that of Dihydroxy-acid dehydratase 1 from Cupriavidus pinatubonensis (strain JMP 134 / LMG 1197) (Cupriavidus necator (strain JMP 134)).